Consider the following 27-residue polypeptide: Alpha-benincasin (27 aa).

Has weak antifungal activity toward C.comatus and P.piricola but not toward M.arachidicola. Inhibits cell-free translation in rabbit reticulocyte lysate system. The protein is Alpha-benincasin of Benincasa hispida (Wax gourd).